Consider the following 483-residue polypeptide: Coagulation factor X isoform 1 (483 aa).

The N-terminal stretch at 1–20 is a signal peptide; it reads MAPQLLLCLILTFLWSLPEA. The propeptide occupies 21-40; sequence ESNVFLKSKVANRFLQRTKR. The Gla domain occupies 41–86; sequence ANSLFEEFKSGNIERECIEERCSKEEAREAFEDDEKTETFWNVYVD. A 4-carboxyglutamate mark is found at Glu46, Glu47, Glu54, Glu56, Glu59, Glu60, Glu65, Glu66, Glu69, Glu72, and Glu75. Cys57 and Cys62 form a disulfide bridge. Residues 86-122 form the EGF-like 1; calcium-binding domain; that stretch reads DGDQCSSNPCHYGGTCKDGIGSYTCTCLSGYEGKNCE. Intrachain disulfides connect Cys90-Cys101, Cys95-Cys110, Cys112-Cys121, Cys129-Cys140, Cys136-Cys149, Cys151-Cys164, Cys172-Cys345, Cys245-Cys250, Cys265-Cys281, Cys393-Cys407, and Cys418-Cys446. The O-linked (Hex...) serine glycan is linked to Ser92. At Asp103 the chain carries (3R)-3-hydroxyaspartate. One can recognise an EGF-like 2 domain in the interval 125-165; sequence LYKSCRVDNGDCWHFCKPVQNGIQCSCAESYLLGEDGHSCV. The propeptide at 183 to 238 is activation peptide; it reads EANLPDFQTDFSDDYDEIDENNFVETPTNFSGLVLTVQSQNATLLKKSDNPSPDIR. Positions 239–470 constitute a Peptidase S1 domain; the sequence is VVNGTDCKLG…FILWIKRIIR (232 aa). The active-site Charge relay system is His280. Asn283 carries an N-linked (GlcNAc...) asparagine glycan. Asp325 serves as the catalytic Charge relay system. The active-site Charge relay system is Ser422.

Belongs to the peptidase S1 family. As to quaternary structure, heterodimer of a light chain and a heavy chain; disulfide-linked. Gamma-carboxyglutamate residues are formed by vitamin K dependent carboxylation. These residues are essential for the binding of calcium. Post-translationally, the activation peptide is cleaved by factor IXa (in the intrinsic pathway), or by factor VIIa (in the extrinsic pathway). In terms of processing, the iron and 2-oxoglutarate dependent 3-hydroxylation of aspartate and asparagine is (R) stereospecific within EGF domains. As to expression, plasma; synthesized in the liver.

It is found in the secreted. The catalysed reaction is Selective cleavage of Arg-|-Thr and then Arg-|-Ile bonds in prothrombin to form thrombin.. Its function is as follows. Factor Xa is a vitamin K-dependent glycoprotein that converts prothrombin to thrombin in the presence of factor Va, calcium and phospholipid during blood clotting. In Pseudonaja textilis (Eastern brown snake), this protein is Coagulation factor X isoform 1 (F10).